A 502-amino-acid polypeptide reads, in one-letter code: MPGETITLQVGQCGNQVGLQYWQQLATEHGIQSDGSSTPYPKDINDLQLQELNNSGSSPQSYPQQTKPNGKYRNDHPELFFTLSDSNTYTPRSILIDMEPSVIAKSTSALPMFNPRNVHLSNQGNGAANNWINGYKYGTEEEETLLNLIDREVDKCDNLSNFQLFHSVAGGTGSGVGSKMLEVISDRYGHKKLLNTFSIFPSNEDTSDVVVQPYNTILTLKRLIDYSDATFVFHNDSLNRIENILFNNNSNIQHDDNDLFLGANKLIALVSASVSNPLRFPGYMYSSMESIVSNLIPTPDLKFLTSSIAPFSTQKHNYLNEYDMLLELSNDRYKTNRVGGDTSYISMLNYLIGYNLDQREIRKGILKSQQRISFVPWVARSVLVVHGKKSPYLKNTNLEGIQVTNNTSMIDVFTKILKQFDLLIKRKAYLNRYYSSVEEENEVMEMFNESRESVKSIIDEYKACKEITYLDDDDEDDLEDGDGGGGGNGNGYNNIDDADMGI.

Positions 51-68 are enriched in polar residues; that stretch reads ELNNSGSSPQSYPQQTKP. Positions 51 to 73 are disordered; the sequence is ELNNSGSSPQSYPQQTKPNGKYR. Residue 169–175 coordinates GTP; that stretch reads AGGTGSG. Acidic residues predominate over residues 473–482; that stretch reads DDEDDLEDGD. Positions 473–502 are disordered; the sequence is DDEDDLEDGDGGGGGNGNGYNNIDDADMGI.

The protein belongs to the tubulin family.

It localises to the cytoplasm. It is found in the cytoskeleton. Its subcellular location is the microtubule organizing center. The protein localises to the spindle pole body. Functionally, tubulin is the major constituent of microtubules. The gamma chain is found at microtubule organizing centers (MTOC) such as the spindle poles or the centrosome, suggesting that it is involved in the minus-end nucleation of microtubule assembly. The chain is Tubulin gamma chain (TUB4) from Candida albicans (Yeast).